The following is a 162-amino-acid chain: Probable chemoreceptor glutamine deamidase CheD (162 aa).

It belongs to the CheD family.

The catalysed reaction is L-glutaminyl-[protein] + H2O = L-glutamyl-[protein] + NH4(+). Its function is as follows. Probably deamidates glutamine residues to glutamate on methyl-accepting chemotaxis receptors (MCPs), playing an important role in chemotaxis. The sequence is that of Probable chemoreceptor glutamine deamidase CheD from Pyrococcus horikoshii (strain ATCC 700860 / DSM 12428 / JCM 9974 / NBRC 100139 / OT-3).